Here is a 324-residue protein sequence, read N- to C-terminus: UDP-N-acetylenolpyruvoylglucosamine reductase (324 aa).

In terms of domain architecture, FAD-binding PCMH-type spans 36 to 203 (FRAGGLAELM…THAIFEGFPE (168 aa)). Residue Arg-183 is part of the active site. Ser-232 functions as the Proton donor in the catalytic mechanism. Glu-302 is an active-site residue.

This sequence belongs to the MurB family. It depends on FAD as a cofactor.

The protein resides in the cytoplasm. It catalyses the reaction UDP-N-acetyl-alpha-D-muramate + NADP(+) = UDP-N-acetyl-3-O-(1-carboxyvinyl)-alpha-D-glucosamine + NADPH + H(+). It participates in cell wall biogenesis; peptidoglycan biosynthesis. In terms of biological role, cell wall formation. This chain is UDP-N-acetylenolpyruvoylglucosamine reductase, found in Sinorhizobium fredii (strain NBRC 101917 / NGR234).